The sequence spans 146 residues: uncharacterized protein (146 aa).

The helical transmembrane segment at 7–27 threads the bilayer; it reads FVLSITIVLVILIIIAYIWYN.

It belongs to the asfivirus E146L family.

It localises to the host membrane. It is found in the virion. This is an uncharacterized protein from Ornithodoros (relapsing fever ticks).